The following is an 86-amino-acid chain: Antifungal protein 2 (86 aa).

An N-terminal signal peptide occupies residues 1–21 (MHLSTALFSAIALLAATQVIG). Intrachain disulfides connect cysteine 43–cysteine 57, cysteine 45–cysteine 74, and cysteine 49–cysteine 83. Residues 44–54 (NCPNNCKHKKG) form a lipid-binding region. The short motif at 72–83 (GKCEWQGGQLNC) is the Gamma-core element.

The protein resides in the secreted. In terms of biological role, cysteine-rich antifungal protein highly effective against yeasts such as clinically relevant Candida species, including the multidrug-resistant pathogen Candida auris. Does not cause metabolic inactivity and apoptosis induction, but the fungal cell-killing activity is connected to its pore-forming ability in the cell membrane. NFAP2 has a low potential to trigger resistance in C.albicans in vitro, and the developed tolerance to NFAP2 is not associated with severe phenotypic changes compared with development of resistance to generic fluconazole. This is Antifungal protein 2 from Neosartorya fischeri (strain ATCC 1020 / DSM 3700 / CBS 544.65 / FGSC A1164 / JCM 1740 / NRRL 181 / WB 181) (Aspergillus fischerianus).